The primary structure comprises 212 residues: Small ribosomal subunit protein uS4c (212 aa).

In terms of domain architecture, S4 RNA-binding spans 89–152; that stretch reads MRLDNIIFRL…RSRALVDKNL (64 aa).

This sequence belongs to the universal ribosomal protein uS4 family. In terms of assembly, part of the 30S ribosomal subunit. Contacts protein S5. The interaction surface between S4 and S5 is involved in control of translational fidelity.

It localises to the plastid. It is found in the chloroplast. Functionally, one of the primary rRNA binding proteins, it binds directly to 16S rRNA where it nucleates assembly of the body of the 30S subunit. In terms of biological role, with S5 and S12 plays an important role in translational accuracy. The sequence is that of Small ribosomal subunit protein uS4c (rps4) from Staurastrum punctulatum (Green alga).